The primary structure comprises 183 residues: Large ribosomal subunit protein uL6 (183 aa).

The protein belongs to the universal ribosomal protein uL6 family. As to quaternary structure, part of the 50S ribosomal subunit.

This protein binds to the 23S rRNA, and is important in its secondary structure. It is located near the subunit interface in the base of the L7/L12 stalk, and near the tRNA binding site of the peptidyltransferase center. In Ruminiclostridium cellulolyticum (strain ATCC 35319 / DSM 5812 / JCM 6584 / H10) (Clostridium cellulolyticum), this protein is Large ribosomal subunit protein uL6.